The primary structure comprises 232 residues: Venom allergen 5 (232 aa).

Residues 1 to 23 (MEQIKYLLIGIIFSSAISSSLQC) form the signal peptide. Cystine bridges form between C28/C43, C54/C119, and C198/C215. The SCP domain maps to 71 to 217 (LQLHNELRAK…FYTTMVACNY (147 aa)).

It belongs to the CRISP family. Venom allergen 5-like subfamily. As to expression, expressed by the venom gland.

It localises to the secreted. This Microctonus hyperodae (Parasitoid wasp) protein is Venom allergen 5.